Here is a 316-residue protein sequence, read N- to C-terminus: MKTFVNIFLGFFIFESVGAVPITDTVTYDSEFYDVSLGELPHPFVSAENDQSDQVETEIGTAIPSIIQESYSSAPLTEEPEEEASTPKLIDGSSAQGSGVLVPQTQDGLPTCLLCTCLGTTVYCDDRELDAVPPLPKNTMYFYSRYNRIRKINKNDFANLNNLKRIDLTANLISEIHEDAFRRLPQLLELVLRDNRIRQLPELPSTLTLIDISNNRLGRKGIRNEAFKDLHELQHLYITDNNLDHVPLPLPESLQALHLQNNNIQEMHEDTFCKMRDFSYVRRALEDIRLDGNPINLSKTPYAYMCLPRLPVGNLI.

The signal sequence occupies residues 1–23 (MKTFVNIFLGFFIFESVGAVPIT). Ser-98 carries O-linked (Xyl...) (dermatan sulfate) serine glycosylation. An LRRNT domain is found at 100 to 137 (VLVPQTQDGLPTCLLCTCLGTTVYCDDRELDAVPPLPK). Cys-112 and Cys-124 are disulfide-bonded. LRR repeat units lie at residues 138-159 (NTMY…DFAN), 162-183 (NLKR…AFRR), 186-207 (QLLE…PSTL), 232-252 (ELQH…PLPE), 253-274 (SLQA…TFCK), and 284-304 (ALED…PYAY). A disulfide bridge links Cys-273 with Cys-306. Asn-296 is a glycosylation site (N-linked (GlcNAc...) asparagine).

The protein belongs to the small leucine-rich proteoglycan (SLRP) family. SLRP class III subfamily. In terms of processing, the O-linked glycosaminoglycan chain(s) are dermatan sulfate. In terms of tissue distribution, preferentially expressed in flattened chondrocytes of developing chick limb cartilage. Also found in the cartilage peripheral zone bordering with bone marrow cavity.

Its subcellular location is the secreted. The protein resides in the extracellular space. It localises to the extracellular matrix. May have a role in bone formation and also in establishing the ordered structure of cartilage through matrix organization. The sequence is that of Epiphycan (EPYC) from Gallus gallus (Chicken).